Consider the following 695-residue polypeptide: Polyribonucleotide nucleotidyltransferase (695 aa).

Positions 486 and 492 each coordinate Mg(2+). One can recognise a KH domain in the interval P553–I612. The 69-residue stretch at G622–K690 folds into the S1 motif domain.

It belongs to the polyribonucleotide nucleotidyltransferase family. It depends on Mg(2+) as a cofactor.

The protein localises to the cytoplasm. The catalysed reaction is RNA(n+1) + phosphate = RNA(n) + a ribonucleoside 5'-diphosphate. Functionally, involved in mRNA degradation. Catalyzes the phosphorolysis of single-stranded polyribonucleotides processively in the 3'- to 5'-direction. In Chlamydia trachomatis serovar A (strain ATCC VR-571B / DSM 19440 / HAR-13), this protein is Polyribonucleotide nucleotidyltransferase.